The sequence spans 464 residues: Glutamate--tRNA ligase (464 aa).

The 'HIGH' region motif lies at 9-19; it reads PSPTGYLHIGG. Positions 242–246 match the 'KMSKS' region motif; it reads KISKR. An ATP-binding site is contributed by K245.

It belongs to the class-I aminoacyl-tRNA synthetase family. Glutamate--tRNA ligase type 1 subfamily. In terms of assembly, monomer.

The protein localises to the cytoplasm. It carries out the reaction tRNA(Glu) + L-glutamate + ATP = L-glutamyl-tRNA(Glu) + AMP + diphosphate. In terms of biological role, catalyzes the attachment of glutamate to tRNA(Glu) in a two-step reaction: glutamate is first activated by ATP to form Glu-AMP and then transferred to the acceptor end of tRNA(Glu). This Neisseria gonorrhoeae (strain NCCP11945) protein is Glutamate--tRNA ligase.